The chain runs to 59 residues: Large ribosomal subunit protein uL30 (59 aa).

The protein belongs to the universal ribosomal protein uL30 family. Part of the 50S ribosomal subunit.

In Histophilus somni (strain 129Pt) (Haemophilus somnus), this protein is Large ribosomal subunit protein uL30.